We begin with the raw amino-acid sequence, 308 residues long: Homoserine O-acetyltransferase (308 aa).

The active-site Acyl-thioester intermediate is the C142. Substrate contacts are provided by K163 and S192. H235 (proton acceptor) is an active-site residue. The active site involves E237. R249 lines the substrate pocket.

It belongs to the MetA family.

It localises to the cytoplasm. The catalysed reaction is L-homoserine + acetyl-CoA = O-acetyl-L-homoserine + CoA. The protein operates within amino-acid biosynthesis; L-methionine biosynthesis via de novo pathway; O-acetyl-L-homoserine from L-homoserine: step 1/1. Its function is as follows. Transfers an acetyl group from acetyl-CoA to L-homoserine, forming acetyl-L-homoserine. In Agrobacterium fabrum (strain C58 / ATCC 33970) (Agrobacterium tumefaciens (strain C58)), this protein is Homoserine O-acetyltransferase.